Reading from the N-terminus, the 503-residue chain is Probable cytosol aminopeptidase (503 aa).

Lys274 and Asp279 together coordinate Mn(2+). Residue Lys286 is part of the active site. The Mn(2+) site is built by Asp297, Asp356, and Glu358. Residue Arg360 is part of the active site.

This sequence belongs to the peptidase M17 family. Requires Mn(2+) as cofactor.

The protein resides in the cytoplasm. The enzyme catalyses Release of an N-terminal amino acid, Xaa-|-Yaa-, in which Xaa is preferably Leu, but may be other amino acids including Pro although not Arg or Lys, and Yaa may be Pro. Amino acid amides and methyl esters are also readily hydrolyzed, but rates on arylamides are exceedingly low.. The catalysed reaction is Release of an N-terminal amino acid, preferentially leucine, but not glutamic or aspartic acids.. Functionally, presumably involved in the processing and regular turnover of intracellular proteins. Catalyzes the removal of unsubstituted N-terminal amino acids from various peptides. This is Probable cytosol aminopeptidase from Burkholderia orbicola (strain AU 1054).